Here is a 586-residue protein sequence, read N- to C-terminus: Adenine deaminase (586 aa).

It belongs to the metallo-dependent hydrolases superfamily. Adenine deaminase family. Mn(2+) is required as a cofactor.

The catalysed reaction is adenine + H2O + H(+) = hypoxanthine + NH4(+). The polypeptide is Adenine deaminase (Bdellovibrio bacteriovorus (strain ATCC 15356 / DSM 50701 / NCIMB 9529 / HD100)).